The sequence spans 735 residues: Muskelin (735 aa).

A2 is modified (N-acetylalanine). Residues 172-204 (REQEAIRLCLKHFRQHNYTEAFESLQKKTKIAL) enclose the LisH domain. Positions 206–258 (HPMLTDIHDKLVLKGDFDACEELIEKAVNDGLFNQYISQQEYKPRWSQIIPKS) constitute a CTLH domain. Kelch repeat units lie at residues 284 to 330 (TVYL…SCHK), 339 to 391 (QIYT…FDHQ), 408 to 458 (ILTC…SRIG), 469 to 515 (CLYV…TGFT), 526 to 578 (EIHV…SLQE), and 597 to 651 (VHYL…AQMD).

Homodimer; may form higher oligomers. Identified in the CTLH complex that contains GID4, RANBP9 and/or RANBP10, MKLN1, MAEA, RMND5A (or alternatively its paralog RMND5B), GID8, ARMC8, WDR26 and YPEL5. Within this complex, MAEA, RMND5A (or alternatively its paralog RMND5B), GID8, WDR26, and RANBP9 and/or RANBP10 form the catalytic core, while GID4, MKLN1, ARMC8 and YPEL5 have ancillary roles. Interacts with RANBP9. Part of a complex consisting of RANBP9, MKLN1 and GID8. Interacts with GABRA1. Interacts with the C-terminal tail of PTGER3.

The protein localises to the cytoplasm. Its subcellular location is the cytosol. The protein resides in the nucleus. It localises to the nucleoplasm. It is found in the cell projection. The protein localises to the ruffle. Its subcellular location is the cell cortex. The protein resides in the synapse. It localises to the postsynapse. Its function is as follows. Component of the CTLH E3 ubiquitin-protein ligase complex that selectively accepts ubiquitin from UBE2H and mediates ubiquitination and subsequent proteasomal degradation of the transcription factor HBP1. Required for internalization of the GABA receptor GABRA1 from the cell membrane via endosomes and subsequent GABRA1 degradation. Acts as a mediator of cell spreading and cytoskeletal responses to the extracellular matrix component THBS1. The chain is Muskelin (MKLN1) from Pongo abelii (Sumatran orangutan).